We begin with the raw amino-acid sequence, 370 residues long: tRNA-specific 2-thiouridylase MnmA (370 aa).

ATP-binding positions include 24 to 31 (AMSGGVDS) and Leu-50. Cys-119 serves as the catalytic Nucleophile. Cys-119 and Cys-215 are disulfide-bonded. Gly-143 is a binding site for ATP. Residues 165-167 (KDQ) are interaction with tRNA. Residue Cys-215 is the Cysteine persulfide intermediate of the active site.

It belongs to the MnmA/TRMU family.

Its subcellular location is the cytoplasm. It carries out the reaction S-sulfanyl-L-cysteinyl-[protein] + uridine(34) in tRNA + AH2 + ATP = 2-thiouridine(34) in tRNA + L-cysteinyl-[protein] + A + AMP + diphosphate + H(+). Functionally, catalyzes the 2-thiolation of uridine at the wobble position (U34) of tRNA, leading to the formation of s(2)U34. The sequence is that of tRNA-specific 2-thiouridylase MnmA from Wolbachia pipientis wMel.